A 714-amino-acid chain; its full sequence is Fatty acid oxidation complex subunit alpha (714 aa).

Residues 1-190 (MEMASAFTLN…KLGLVDDVVP (190 aa)) are enoyl-CoA hydratase. Residues 306–714 (APLNSVGILG…FWKTTATDLQ (409 aa)) form a 3-hydroxyacyl-CoA dehydrogenase region.

The protein in the N-terminal section; belongs to the enoyl-CoA hydratase/isomerase family. It in the central section; belongs to the 3-hydroxyacyl-CoA dehydrogenase family. As to quaternary structure, heterotetramer of two alpha chains (FadJ) and two beta chains (FadI).

It is found in the cytoplasm. The enzyme catalyses a (3S)-3-hydroxyacyl-CoA = a (2E)-enoyl-CoA + H2O. The catalysed reaction is a 4-saturated-(3S)-3-hydroxyacyl-CoA = a (3E)-enoyl-CoA + H2O. It catalyses the reaction a (3S)-3-hydroxyacyl-CoA + NAD(+) = a 3-oxoacyl-CoA + NADH + H(+). It carries out the reaction (3S)-3-hydroxybutanoyl-CoA = (3R)-3-hydroxybutanoyl-CoA. It participates in lipid metabolism; fatty acid beta-oxidation. Its function is as follows. Catalyzes the formation of a hydroxyacyl-CoA by addition of water on enoyl-CoA. Also exhibits 3-hydroxyacyl-CoA epimerase and 3-hydroxyacyl-CoA dehydrogenase activities. In Escherichia coli (strain ATCC 8739 / DSM 1576 / NBRC 3972 / NCIMB 8545 / WDCM 00012 / Crooks), this protein is Fatty acid oxidation complex subunit alpha.